A 229-amino-acid polypeptide reads, in one-letter code: Small ribosomal subunit protein uS3 (229 aa).

The KH type-2 domain occupies 18–87 (IDEYLAKQYY…NPQITITNVE (70 aa)).

The protein belongs to the universal ribosomal protein uS3 family. In terms of assembly, part of the 30S ribosomal subunit.

Its function is as follows. Binds the lower part of the 30S subunit head. In Saccharolobus solfataricus (strain ATCC 35092 / DSM 1617 / JCM 11322 / P2) (Sulfolobus solfataricus), this protein is Small ribosomal subunit protein uS3.